The primary structure comprises 266 residues: Integral membrane protein 2B (266 aa).

Topologically, residues 1–54 (MVKVTFNSALAQKEAKKDEPKSGEEALIIPPDAVAVDCKDPDDVVPVGQRRAWC) are cytoplasmic. A helical; Signal-anchor for type II membrane protein transmembrane segment spans residues 55-75 (WCMCFGLAFMLAGVILGGAYL). Residues 76-266 (YKYFALQPDD…KFAVETLICS (191 aa)) are Lumenal-facing. A necessary for interaction with APP and inhibitor effects on APP processing region spans residues 102–134 (EPSADAPAALYQTIEENIKIFEEEEVEFISVPV). The 95-residue stretch at 137 to 231 (FADSDPANIV…LCHDKETYKL (95 aa)) folds into the BRICHOS domain. Cystine bridges form between C164-C223 and C248-C265. N170 carries an N-linked (GlcNAc...) asparagine glycan.

Belongs to the ITM2 family. As to quaternary structure, homodimer; disulfide-linked. Interacts with SPPL2A and SPPL2B. Interacts with APP. Mature BRI2 (mBRI2) interacts with the APP amyloid-beta A4 protein; the interaction occurs at the cell surface and in the endocytic compartments and enable alpha- and beta-secretase-induced APP cleavage inhibition. Mature BRI2 (mBRI2) interacts with the APP C99; the interaction occurs in the endocytic compartments and enable gamma-secretase-induced C99 cleavage inhibition. May form heterodimers with Bri23 peptide and APP amyloid-beta protein 40. Interacts with ADAM7 in sperm; the interaction increases following capacitation. Post-translationally, the ectodomain C-terminal part of the imBRI2 is processed by furin producing a secreted Bri23 peptide and a mature BRI2, membrane form (mBRI2). The remaining part of the ectodomain of mBRI2 containing the BRICHOS domain is cleaved by ADAM10 and is secreted (BRI2C, soluble form). The membrane-bound N-terminal fragment (BRI2C, membrane form) is further proteolytically processed by SPPL2A and SPPL2B through regulated intramembrane proteolysis producing a secreted C-peptide and a BRI2 intracellular domain (BRI2 ICD) released in the cytosol. Shedding by ADAM10 facilitates intramembrane cleavage but is not absolutely required for BRI2 ICD generation. In terms of processing, glycosylation at Asn-170 is important for cell surface localization, but doesn't affect furin- and ADAM10-induced proteolytic processing. Ubiquitous. Expressed in brain.

It is found in the golgi apparatus membrane. Its subcellular location is the cell membrane. The protein resides in the endosome membrane. It localises to the secreted. Functionally, plays a regulatory role in the processing of the amyloid-beta A4 precursor protein (APP) and acts as an inhibitor of the amyloid-beta peptide aggregation and fibrils deposition. Plays a role in the induction of neurite outgrowth. Functions as a protease inhibitor by blocking access of secretases to APP cleavage sites. Mature BRI2 (mBRI2) functions as a modulator of the amyloid-beta A4 precursor protein (APP) processing leading to a strong reduction in the secretion of secretase-processed amyloid-beta protein 40 and amyloid-beta protein 42. In terms of biological role, bri23 peptide prevents aggregation of APP amyloid-beta protein 42 into toxic oligomers. The polypeptide is Integral membrane protein 2B (ITM2B) (Homo sapiens (Human)).